Here is a 123-residue protein sequence, read N- to C-terminus: ATP synthase epsilon chain (123 aa).

This sequence belongs to the ATPase epsilon chain family. F-type ATPases have 2 components, CF(1) - the catalytic core - and CF(0) - the membrane proton channel. CF(1) has five subunits: alpha(3), beta(3), gamma(1), delta(1), epsilon(1). CF(0) has three main subunits: a, b and c.

It is found in the cell inner membrane. In terms of biological role, produces ATP from ADP in the presence of a proton gradient across the membrane. The sequence is that of ATP synthase epsilon chain (atpC) from Helicobacter pylori (strain ATCC 700392 / 26695) (Campylobacter pylori).